The chain runs to 185 residues: Ribosome-recycling factor (185 aa).

This sequence belongs to the RRF family.

Its subcellular location is the cytoplasm. Its function is as follows. Responsible for the release of ribosomes from messenger RNA at the termination of protein biosynthesis. May increase the efficiency of translation by recycling ribosomes from one round of translation to another. This chain is Ribosome-recycling factor, found in Alcanivorax borkumensis (strain ATCC 700651 / DSM 11573 / NCIMB 13689 / SK2).